A 132-amino-acid chain; its full sequence is Small ribosomal subunit protein uS8 (132 aa).

This sequence belongs to the universal ribosomal protein uS8 family. Part of the 30S ribosomal subunit. Contacts proteins S5 and S12.

One of the primary rRNA binding proteins, it binds directly to 16S rRNA central domain where it helps coordinate assembly of the platform of the 30S subunit. This Geobacter sp. (strain M21) protein is Small ribosomal subunit protein uS8.